Here is a 355-residue protein sequence, read N- to C-terminus: Protein RecA (355 aa).

Position 67–74 (67–74 (GPESSGKT)) interacts with ATP.

This sequence belongs to the RecA family.

The protein resides in the cytoplasm. In terms of biological role, can catalyze the hydrolysis of ATP in the presence of single-stranded DNA, the ATP-dependent uptake of single-stranded DNA by duplex DNA, and the ATP-dependent hybridization of homologous single-stranded DNAs. It interacts with LexA causing its activation and leading to its autocatalytic cleavage. The chain is Protein RecA from Histophilus somni (strain 129Pt) (Haemophilus somnus).